A 421-amino-acid chain; its full sequence is Testin (421 aa).

In terms of domain architecture, PET spans methionine 92–aspartate 199. Residues glutamate 133–cysteine 164 form a disordered region. Residues proline 155–cysteine 164 show a composition bias toward basic and acidic residues. 3 LIM zinc-binding domains span residues tyrosine 234 to glutamate 297, proline 299 to valine 359, and glutamine 362 to serine 421.

This sequence belongs to the prickle / espinas / testin family. Interacts via LIM domain 1 with ZYX. Interacts (via LIM domain 3) with ENAH and VASP. Interacts with ALKBH4, talin, actin, alpha-actinin, GRIP1 and PXN. Interacts (via LIM domain 2) with ACTL7A (via N-terminus). Heterodimer with ACTL7A; the heterodimer interacts with ENAH to form a heterotrimer.

It is found in the cytoplasm. The protein resides in the cell junction. It localises to the focal adhesion. Its function is as follows. Scaffold protein that may play a role in cell adhesion, cell spreading and in the reorganization of the actin cytoskeleton. Plays a role in the regulation of cell proliferation. May act as a tumor suppressor. The sequence is that of Testin (TES) from Saimiri boliviensis boliviensis (Bolivian squirrel monkey).